A 428-amino-acid chain; its full sequence is Cytokine-dependent hematopoietic cell linker (428 aa).

The disordered stretch occupies residues 1–22 (MNRQGNRKTTKEGSNDLKFQNF). A phosphotyrosine; by LYN mark is found at tyrosine 69 and tyrosine 96. 2 disordered regions span residues 135–198 (DKPI…EVQR) and 244–271 (SSSF…PQRC). Residues 159–164 (PLPPPR) are mediates interaction with PLCG1; essential for BCR signaling; involved in restoration of BCR-induced calcium response and ERK2 and JNK2 activation in BLNK-deficient cells expressing LAT. The tract at residues 178-180 (PEP) is mediates interaction with LAT, GRB2, and FGR; involved in translocation to the glycolipid-enriched microdomain and restoration of BCR-induced calcium response in BLNK-deficient DT40 cells expressing LAT. Residues 244-253 (SSSFTTSNHS) show a composition bias toward low complexity. The 111-residue stretch at 309–419 (WYIGEYSRQA…RKQCHLTQPL (111 aa)) folds into the SH2 domain.

As to quaternary structure, when phosphorylated, interacts with PLCG1, PLCG2, GRB2, VAV and LAT. Interacts with LBR and AGO2. Interacts with FGR. Part of a complex consisting of CLNK, SKAP1 and FYB1. Interacts (via SH2 domain) with FYB1; this interaction allows SKAP1 and FYB1 to promote tyrosine phosphorylation of CLNK by LYN. Interacts (via SH2 domain) with MAP4K1. In terms of processing, tyrosine-phosphorylated upon BCR cross-linking. Tyrosine phosphorylation at both Tyr-69 and Tyr-96 are required for BCR-induced calcium response and are essential to restore PLCG2-mediated signaling in BLNK-deficient DT40 cells, but this phosphorylation is dispensable in cells expressing LAT. Interacts with the SH2 domain of PLCG1 via phosphorylated Tyr-96. Tyrosine phosphorylation is increased when complexed with SKAP1 and FYB1.

The protein localises to the cytoplasm. In terms of biological role, an adapter protein which plays a role in the regulation of immunoreceptor signaling, including PLC-gamma-mediated B-cell antigen receptor (BCR) signaling and FC-epsilon R1-mediated mast cell degranulation. Together with FGR, it acts as a negative regulator of natural killer cell-activating receptors and inhibits interferon-gamma production. Acts as a positive regulator of both T-cell receptor and natural killer T (NKT) cell receptor signaling in CD4-positive NKT cells. Together with MAP4K1, it enhances CD3-triggered activation of T-cells and subsequent IL2 production. May be involved in tumor necrosis factor induced cell death by promoting reactive oxidative species generation, and MLKL oligomerization, ultimately leading to necrosis. Involved in phosphorylation of LAT. May be involved in high affinity immunoglobulin epsilon receptor signaling in mast cells. This chain is Cytokine-dependent hematopoietic cell linker (CLNK), found in Homo sapiens (Human).